A 417-amino-acid chain; its full sequence is UPF0597 protein FMG_0209 (417 aa).

The protein belongs to the UPF0597 family.

This is UPF0597 protein FMG_0209 from Finegoldia magna (strain ATCC 29328 / DSM 20472 / WAL 2508) (Peptostreptococcus magnus).